Here is a 545-residue protein sequence, read N- to C-terminus: Glucose-6-phosphate isomerase (545 aa).

Residue E343 is the Proton donor of the active site. Active-site residues include H374 and K513.

The protein belongs to the GPI family.

The protein localises to the cytoplasm. It catalyses the reaction alpha-D-glucose 6-phosphate = beta-D-fructose 6-phosphate. It functions in the pathway carbohydrate biosynthesis; gluconeogenesis. Its pathway is carbohydrate degradation; glycolysis; D-glyceraldehyde 3-phosphate and glycerone phosphate from D-glucose: step 2/4. Catalyzes the reversible isomerization of glucose-6-phosphate to fructose-6-phosphate. The chain is Glucose-6-phosphate isomerase from Methylibium petroleiphilum (strain ATCC BAA-1232 / LMG 22953 / PM1).